A 708-amino-acid chain; its full sequence is Glycogen [starch] synthase isoform 1 (708 aa).

Residue R20 participates in UDP binding. S159 carries the phosphoserine modification. UDP-alpha-D-glucose contacts are provided by H193 and R199. H280, E281, Q283, H286, and K290 together coordinate alpha-D-glucose 6-phosphate. Residue R320 coordinates UDP. UDP-alpha-D-glucose is bound at residue R320. S363 carries the post-translational modification Phosphoserine. H500 serves as a coordination point for alpha-D-glucose 6-phosphate. E509, W511, and G512 together coordinate UDP-alpha-D-glucose. T514 is a UDP binding site. The residue at position 560 (S560) is a Phosphoserine. Positions 583 and 587 each coordinate alpha-D-glucose 6-phosphate. Phosphoserine is present on residues S651 and S655. Residues S660 and S662 each carry the phosphoserine; by PKA modification. The disordered stretch occupies residues 687-708 (STNGAIDNDDDDNDTSAYYEDN). Residues 693–708 (DNDDDDNDTSAYYEDN) show a composition bias toward acidic residues.

Belongs to the glycosyltransferase 3 family.

The catalysed reaction is [(1-&gt;4)-alpha-D-glucosyl](n) + UDP-alpha-D-glucose = [(1-&gt;4)-alpha-D-glucosyl](n+1) + UDP + H(+). The protein operates within glycan biosynthesis; glycogen biosynthesis. Allosteric activation by glucose-6-phosphate, and phosphorylation by a cAMP-dependent kinase. Glycogen synthase participates in the glycogen biosynthetic process along with glycogenin and glycogen branching enzyme. Extends the primer composed of a few glucose units formed by glycogenin by adding new glucose units to it. In this context, glycogen synthase transfers the glycosyl residue from UDP-Glc to the non-reducing end of alpha-1,4-glucan. The polypeptide is Glycogen [starch] synthase isoform 1 (GSY1) (Saccharomyces cerevisiae (strain ATCC 204508 / S288c) (Baker's yeast)).